Here is a 645-residue protein sequence, read N- to C-terminus: Serine/threonine-protein kinase Nek11 (645 aa).

Positions 29–287 constitute a Protein kinase domain; the sequence is YVLQQKLGSG…AIEILKIPYL (259 aa). ATP-binding positions include 35–43 and K61; that span reads LGSGSFGTV. Residue D158 is the Proton acceptor of the active site. Phosphoserine; by CHEK1 is present on S273. Residues 346–385 are a coiled coil; that stretch reads RLRKLQAADEKARKLKKIVEEKYEENSKRMQELRSRNFQQ. Residues 399-445 are disordered; the sequence is GMEEKEEQPEGRLSCSPQDEDEERWQGREEESDEPTLENLPESQPIP.

The protein belongs to the protein kinase superfamily. NEK Ser/Thr protein kinase family. NIMA subfamily. As to quaternary structure, interacts with isoform 1 of NEK2. The cofactor is Mn(2+). Mg(2+) is required as a cofactor. Phosphorylated by NEK2. Phosphorylation at Ser-273 is important for its activation. As to expression, poorly expressed in cerebellum, trachea, lung, appendix, and uterus.

It localises to the nucleus. It is found in the nucleolus. It catalyses the reaction L-seryl-[protein] + ATP = O-phospho-L-seryl-[protein] + ADP + H(+). The catalysed reaction is L-threonyl-[protein] + ATP = O-phospho-L-threonyl-[protein] + ADP + H(+). With respect to regulation, autorepressed by intramolecular binding of the C-terminus which dissociates following phosphorylation by NEK2 isoform 1 in G1/S-arrested cells. NEK2 isoform 2 is largely not present in the nucleolus, and does not appear to phosphorylate NEK11. Activated in response to DNA damage. Inhibited by zinc. Functionally, protein kinase which plays an important role in the G2/M checkpoint response to DNA damage. Controls degradation of CDC25A by directly phosphorylating it on residues whose phosphorylation is required for BTRC-mediated polyubiquitination and degradation. The chain is Serine/threonine-protein kinase Nek11 from Homo sapiens (Human).